A 297-amino-acid chain; its full sequence is RNA polymerase sigma-F factor (297 aa).

Residues 1–46 form a disordered region; sequence MTVPASTAPQVPPQQDPQVPHPQEPREEPHEEPPSPPAAPRPQSRG. A compositionally biased stretch (pro residues) spans 10-22; it reads QVPPQQDPQVPHP. Residues 23 to 33 are compositionally biased toward basic and acidic residues; the sequence is QEPREEPHEEP. Positions 101–114 match the Polymerase core binding motif; sequence DVVQVGTIGLINAI. Residues 264–283 constitute a DNA-binding region (H-T-H motif); the sequence is QSQISAELGVSQMHVSRLLA.

It belongs to the sigma-70 factor family. SigB subfamily.

Sigma factors are initiation factors that promote the attachment of RNA polymerase to specific initiation sites and are then released. This sigma factor is required for normal spore maturation. The polypeptide is RNA polymerase sigma-F factor (sigF) (Kitasatospora aureofaciens (Streptomyces aureofaciens)).